Reading from the N-terminus, the 33-residue chain is Brevinin-2LT (33 aa).

C27 and C33 are oxidised to a cystine.

Expressed by the skin glands.

The protein resides in the secreted. Functionally, has antibacterial activity. The sequence is that of Brevinin-2LT from Rana latastei (Italian agile frog).